The following is a 488-amino-acid chain: Protein nucleotidyltransferase YdiU (488 aa).

ATP contacts are provided by glycine 91, glycine 93, arginine 94, lysine 114, aspartate 126, glycine 127, arginine 177, and arginine 184. Catalysis depends on aspartate 253, which acts as the Proton acceptor. 2 residues coordinate Mg(2+): asparagine 254 and aspartate 263. Aspartate 263 provides a ligand contact to ATP.

This sequence belongs to the SELO family. It depends on Mg(2+) as a cofactor. Requires Mn(2+) as cofactor.

It catalyses the reaction L-seryl-[protein] + ATP = 3-O-(5'-adenylyl)-L-seryl-[protein] + diphosphate. It carries out the reaction L-threonyl-[protein] + ATP = 3-O-(5'-adenylyl)-L-threonyl-[protein] + diphosphate. The enzyme catalyses L-tyrosyl-[protein] + ATP = O-(5'-adenylyl)-L-tyrosyl-[protein] + diphosphate. The catalysed reaction is L-histidyl-[protein] + UTP = N(tele)-(5'-uridylyl)-L-histidyl-[protein] + diphosphate. It catalyses the reaction L-seryl-[protein] + UTP = O-(5'-uridylyl)-L-seryl-[protein] + diphosphate. It carries out the reaction L-tyrosyl-[protein] + UTP = O-(5'-uridylyl)-L-tyrosyl-[protein] + diphosphate. In terms of biological role, nucleotidyltransferase involved in the post-translational modification of proteins. It can catalyze the addition of adenosine monophosphate (AMP) or uridine monophosphate (UMP) to a protein, resulting in modifications known as AMPylation and UMPylation. The chain is Protein nucleotidyltransferase YdiU from Bacillus cereus (strain B4264).